Reading from the N-terminus, the 461-residue chain is Gustatory and pheromone receptor 32a (461 aa).

Residues 1 to 100 (MSPNTWVIEM…YSFFVRGVVH (100 aa)) lie on the Cytoplasmic side of the membrane. A helical membrane pass occupies residues 101 to 121 (ALTIFNVYSLFTPISAQLFFS). Residues 122–127 (YRETDN) lie on the Extracellular side of the membrane. A helical transmembrane segment spans residues 128–148 (VNQWIELLLCILTYTLTVFVC). The Cytoplasmic portion of the chain corresponds to 149–180 (AHNTTSMLRIMNEILQLDEEVRRQFGANLSQN). Residues 181-201 (FGFLVKFLVGITACQAYIIVL) traverse the membrane as a helical segment. Over 202 to 214 (KIYAVQGEITPTS) the chain is Extracellular. A helical membrane pass occupies residues 215 to 235 (YILLAFYGIQNGLTATYIVFA). At 236-317 (SALLRIVYIR…YKGINDCCNL (82 aa)) the chain is on the cytoplasmic side. A helical membrane pass occupies residues 318-338 (ILVSFLGYSFYTVTTNCYNLF). Over 339–348 (VQITGKGMVS) the chain is Extracellular. The helical transmembrane segment at 349-369 (PNILQWCFAWLCLHVSLLALL) threads the bilayer. Topologically, residues 370-414 (SRSCGLTTTEANATSQILARVYAKSKEYQNIIDKFLTKSIKQEVQ) are cytoplasmic. A helical transmembrane segment spans residues 415–435 (FTAYGFFAIDNSTLFKIFSAV). Over 436 to 461 (TTYLVILIQFKQLEDSKVEDPVPEQT) the chain is Extracellular.

This sequence belongs to the insect chemoreceptor superfamily. Gustatory receptor (GR) family. Gr21a subfamily. Expressed in the adult labellar chemosensory neurons. Expressed in tarsal neurons for male-male courtship suppression. In larvae, is expressed in neurons of the terminal external chemosensory organ, and the dorsal and posterior external chemosensory organs.

The protein resides in the cell membrane. Its function is as follows. Gustatory receptor which mediates acceptance or avoidance behavior, depending on its substrates. Required for the response to N,N-Diethyl-meta-toluamide (DEET), the most widely used insect repellent worldwide. Functions as a pheromone receptor for a male inhibitory pheromone and promotes male-male aggression and suppresses male-male courtship. Also promotes preferentially virgin females courting over mated females. The chain is Gustatory and pheromone receptor 32a (Gr32a) from Drosophila melanogaster (Fruit fly).